A 143-amino-acid polypeptide reads, in one-letter code: uncharacterized protein (143 aa).

The transit peptide at Met1–Ala38 directs the protein to the mitochondrion.

It localises to the mitochondrion. This is an uncharacterized protein from Schizosaccharomyces pombe (strain 972 / ATCC 24843) (Fission yeast).